Reading from the N-terminus, the 298-residue chain is MPANGNPIIAFMSDLGTTDDSVAQCKGLMLSICPGVTIVDVNHSMTPWDVEEGARYIVDLPRFFPEGTVFATTTYPATGTATRSVALRIKQAAQGGARGQWAGSGAGFERAEGSYIYIAPNNGLLTTVIEEHGYIEAYEVSNTKVIPAEPEPTFYSREMVAIPSAHLAAGFPLNEVGRALSDDEIVRFAKPKPSTVSGGVLSGVITNIDHPFGNLWTNIHRTDLEKAGIGYQTQLRLLLDGVLTFDLPLVPTFADAGQIGDPVIYINSRGYLALARNAAPLAYPYNLKAGLTVTVTKA.

Residues D14, 19 to 21, Y75, S156, D209, N214, 268 to 269, and 276 to 278 each bind S-adenosyl-L-methionine; these read DDS, SR, and RNA.

It belongs to the SAM hydrolase / SAM-dependent halogenase family.

It carries out the reaction fluoride + S-adenosyl-L-methionine = 5'-deoxy-5'-fluoroadenosine + L-methionine. Its function is as follows. Catalyzes the formation of a C-F bond by combining S-adenosyl-L-methionine (SAM) and fluoride to generate 5'-fluoro-5'-deoxyadenosine (5'-FDA) and L-methionine. In Actinoplanes sp. (strain N902-109), this protein is Fluorinase.